Consider the following 139-residue polypeptide: MKPAARRRARECAVQALYSWQLSQNDIADVEYQFLAEQDVKDVDVLYFRELLAGVATNTAYLDGLMKPYLSRLLEELGQVEKAVLRIALYELSKRSDVPYKVAINEAIELAKSFGAEDSHKFVNGVLDKAAPVIRPNKK.

The protein belongs to the NusB family.

Involved in transcription antitermination. Required for transcription of ribosomal RNA (rRNA) genes. Binds specifically to the boxA antiterminator sequence of the ribosomal RNA (rrn) operons. In Escherichia coli (strain K12 / MC4100 / BW2952), this protein is Transcription antitermination protein NusB.